The primary structure comprises 321 residues: Glucokinase (321 aa).

8–13 serves as a coordination point for ATP; sequence GDVGGT.

Belongs to the bacterial glucokinase family.

It is found in the cytoplasm. The enzyme catalyses D-glucose + ATP = D-glucose 6-phosphate + ADP + H(+). The protein is Glucokinase of Escherichia coli (strain SMS-3-5 / SECEC).